A 328-amino-acid chain; its full sequence is Tyrosine recombinase XerC (328 aa).

Residues 13–100 form the Core-binding (CB) domain; it reads QAPHPQIAAY…AWRGWFKWMA (88 aa). In terms of domain architecture, Tyr recombinase spans 122–319; the sequence is RLPKALSVEQ…DFQHLAKIYD (198 aa). Catalysis depends on residues arginine 162, lysine 197, histidine 271, arginine 274, and histidine 297. Residue tyrosine 306 is the O-(3'-phospho-DNA)-tyrosine intermediate of the active site.

The protein belongs to the 'phage' integrase family. XerC subfamily. Forms a cyclic heterotetrameric complex composed of two molecules of XerC and two molecules of XerD.

It is found in the cytoplasm. Site-specific tyrosine recombinase, which acts by catalyzing the cutting and rejoining of the recombining DNA molecules. The XerC-XerD complex is essential to convert dimers of the bacterial chromosome into monomers to permit their segregation at cell division. It also contributes to the segregational stability of plasmids. This chain is Tyrosine recombinase XerC, found in Ralstonia pickettii (strain 12J).